Here is a 273-residue protein sequence, read N- to C-terminus: S-adenosylmethionine decarboxylase proenzyme (273 aa).

The active-site Schiff-base intermediate with substrate; via pyruvic acid is serine 118. Residue serine 118 is modified to Pyruvic acid (Ser); by autocatalysis. Histidine 123 (proton acceptor; for processing activity) is an active-site residue. The Proton donor; for catalytic activity role is filled by cysteine 146.

The protein belongs to the prokaryotic AdoMetDC family. Type 2 subfamily. As to quaternary structure, heterooctamer of four alpha and four beta chains arranged as a tetramer of alpha/beta heterodimers. The cofactor is pyruvate. Is synthesized initially as an inactive proenzyme. Formation of the active enzyme involves a self-maturation process in which the active site pyruvoyl group is generated from an internal serine residue via an autocatalytic post-translational modification. Two non-identical subunits are generated from the proenzyme in this reaction, and the pyruvate is formed at the N-terminus of the alpha chain, which is derived from the carboxyl end of the proenzyme. The post-translation cleavage follows an unusual pathway, termed non-hydrolytic serinolysis, in which the side chain hydroxyl group of the serine supplies its oxygen atom to form the C-terminus of the beta chain, while the remainder of the serine residue undergoes an oxidative deamination to produce ammonia and the pyruvoyl group blocking the N-terminus of the alpha chain.

The enzyme catalyses S-adenosyl-L-methionine + H(+) = S-adenosyl 3-(methylsulfanyl)propylamine + CO2. It functions in the pathway amine and polyamine biosynthesis; S-adenosylmethioninamine biosynthesis; S-adenosylmethioninamine from S-adenosyl-L-methionine: step 1/1. Functionally, catalyzes the decarboxylation of S-adenosylmethionine to S-adenosylmethioninamine (dcAdoMet), the propylamine donor required for the synthesis of the polyamines spermine and spermidine from the diamine putrescine. This is S-adenosylmethionine decarboxylase proenzyme from Alkalilimnicola ehrlichii (strain ATCC BAA-1101 / DSM 17681 / MLHE-1).